We begin with the raw amino-acid sequence, 317 residues long: Putative GTPase PH0274 (317 aa).

GTP-binding positions include 54-62 (GPPGAGKST), aspartate 196, and 231-233 (VGT).

The protein belongs to the SIMIBI class G3E GTPase family. ArgK/MeaB subfamily.

Functionally, may have GTPase activity. May also bind and hydrolyze ATP. May function as chaperone. This chain is Putative GTPase PH0274, found in Pyrococcus horikoshii (strain ATCC 700860 / DSM 12428 / JCM 9974 / NBRC 100139 / OT-3).